The following is a 272-amino-acid chain: Acetylglutamate kinase (272 aa).

Residues 41-42, arginine 63, and asparagine 166 each bind substrate; that span reads GG.

It belongs to the acetylglutamate kinase family. ArgB subfamily.

It localises to the cytoplasm. It carries out the reaction N-acetyl-L-glutamate + ATP = N-acetyl-L-glutamyl 5-phosphate + ADP. The protein operates within amino-acid biosynthesis; L-arginine biosynthesis; N(2)-acetyl-L-ornithine from L-glutamate: step 2/4. In terms of biological role, catalyzes the ATP-dependent phosphorylation of N-acetyl-L-glutamate. This Anaeromyxobacter dehalogenans (strain 2CP-1 / ATCC BAA-258) protein is Acetylglutamate kinase.